The primary structure comprises 191 residues: Rho-related GTP-binding protein RhoH (191 aa).

A GTP-binding site is contributed by 11–18 (GDSAVGKT). The Effector region motif lies at 33 to 41 (YKPTVYENT). 58 to 62 (DTAGN) contacts GTP. An interaction with ZAP70 region spans residues 73 to 86 (YQQADVVLMCYSVA). Residue 116-119 (TQTD) coordinates GTP. Cys188 bears the Cysteine methyl ester mark. Cys188 carries S-geranylgeranyl cysteine lipidation. Positions 189–191 (KIF) are cleaved as a propeptide — removed in mature form.

It belongs to the small GTPase superfamily. Rho family. As to quaternary structure, interacts with GDI1 and GDI2. Interacts with ZAP70 (via SH2 domains) and the interaction is enhanced by its phosphorylation by LCK. Interacts with SYK and the interaction is enhanced by its phosphorylation by FYN. Phosphorylated on tyrosine by LCK. Phosphorylated by FYN. Phosphorylation enhances the interactions with ZAP70 and SYK and is critical for its function in thymocyte development. Expression is widespread in hematopoietic cells, including in bone marrow progenitor cells and in differentiated myeloid as well as lymphoid cells. Expressed at high levels in the thymus and mast cells, found in spleen and low-density bone marrow (LDBM) cells and is detected at a low level in neutrophils. In the thymus it is detected in thymocytes of the thymic cortex but not in non-lymphoid cells of fibrovascular and fibroadipose tissues. Expressed in T-cells, B-cells and mast cells.

The protein localises to the cytoplasm. Its subcellular location is the cell membrane. Functionally, binds GTP but lacks intrinsic GTPase activity and is resistant to Rho-specific GTPase-activating proteins. Inhibits the activation of NF-kappa-B by TNF and IKKB and the activation of CRK/p38 by TNF. Inhibits activities of RAC1, RHOA and CDC42. Negatively regulates leukotriene production in neutrophils. Negative regulator of hematopoietic progenitor cell proliferation, survival and migration. Critical regulator of thymocyte development and T-cell antigen receptor (TCR) signaling by mediating recruitment and activation of ZAP70. Required for phosphorylation of CD3Z, membrane translocation of ZAP70 and subsequent activation of the ZAP70-mediated pathways. Essential for efficient beta-selection and positive selection by promoting the ZAP70-dependent phosphorylation of the LAT signalosome during pre-TCR and TCR signaling. Crucial for thymocyte maturation during DN3 to DN4 transition and during positive selection. Plays critical roles in mast cell function by facilitating phosphorylation of SYK in Fc epsilon RI-mediated signal transduction. Essential for the phosphorylation of LAT, LCP2, PLCG1 and PLCG2 and for Ca(2+) mobilization in mast cells. This chain is Rho-related GTP-binding protein RhoH (Rhoh), found in Mus musculus (Mouse).